The sequence spans 189 residues: Small ribosomal subunit protein uS4 (189 aa).

The region spanning 107 to 178 (RRLQTQVFKL…AGRVKRKNQG (72 aa)) is the S4 RNA-binding domain. The tract at residues 160-189 (HNSPYGGGRAGRVKRKNQGKGGEEGAEEEE) is disordered.

This sequence belongs to the universal ribosomal protein uS4 family. In terms of assembly, component of the small ribosomal subunit. Mature ribosomes consist of a small (40S) and a large (60S) subunit. The 40S subunit contains about 32 different proteins and 1 molecule of RNA (18S). The 60S subunit contains 45 different proteins and 3 molecules of RNA (25S, 5.8S and 5S).

The protein resides in the cytoplasm. In terms of biological role, component of the ribosome, a large ribonucleoprotein complex responsible for the synthesis of proteins in the cell. The small ribosomal subunit (SSU) binds messenger RNAs (mRNAs) and translates the encoded message by selecting cognate aminoacyl-transfer RNA (tRNA) molecules. The large subunit (LSU) contains the ribosomal catalytic site termed the peptidyl transferase center (PTC), which catalyzes the formation of peptide bonds, thereby polymerizing the amino acids delivered by tRNAs into a polypeptide chain. The nascent polypeptides leave the ribosome through a tunnel in the LSU and interact with protein factors that function in enzymatic processing, targeting, and the membrane insertion of nascent chains at the exit of the ribosomal tunnel. RPS9B is involved in nucleolar processing of pre-18S ribosomal RNA and ribosome assembly. This chain is Small ribosomal subunit protein uS4 (RPS9B), found in Candida albicans (strain SC5314 / ATCC MYA-2876) (Yeast).